Consider the following 400-residue polypeptide: Elongation factor Tu (400 aa).

Positions 10 to 208 constitute a tr-type G domain; it reads KPHVNVGTIG…AMDNYIPDPQ (199 aa). The interval 19–26 is G1; the sequence is GHIDHGKS. 19–26 contributes to the GTP binding site; that stretch reads GHIDHGKS. A Mg(2+)-binding site is contributed by serine 26. A G2 region spans residues 60–64; that stretch reads GITIN. Residues 81 to 84 are G3; sequence DCPG. GTP is bound by residues 81-85 and 136-139; these read DCPGH and NKTD. The segment at 136-139 is G4; the sequence is NKTD. The tract at residues 174–176 is G5; sequence SAL.

The protein belongs to the TRAFAC class translation factor GTPase superfamily. Classic translation factor GTPase family. EF-Tu/EF-1A subfamily. Monomer.

It localises to the cytoplasm. It carries out the reaction GTP + H2O = GDP + phosphate + H(+). GTP hydrolase that promotes the GTP-dependent binding of aminoacyl-tRNA to the A-site of ribosomes during protein biosynthesis. This Thermotoga neapolitana (strain ATCC 49049 / DSM 4359 / NBRC 107923 / NS-E) protein is Elongation factor Tu.